A 66-amino-acid chain; its full sequence is Large ribosomal subunit protein uL29 (66 aa).

This sequence belongs to the universal ribosomal protein uL29 family.

The polypeptide is Large ribosomal subunit protein uL29 (Hydrogenobaculum sp. (strain Y04AAS1)).